Reading from the N-terminus, the 260-residue chain is Ribonuclease HII (260 aa).

The 191-residue stretch at 70 to 260 (QAIAGIDEVG…PIKSMLKEKN (191 aa)) folds into the RNase H type-2 domain. Residues Asp76, Glu77, and Asp171 each contribute to the a divalent metal cation site.

It belongs to the RNase HII family. Mn(2+) is required as a cofactor. Requires Mg(2+) as cofactor.

The protein resides in the cytoplasm. The enzyme catalyses Endonucleolytic cleavage to 5'-phosphomonoester.. Functionally, endonuclease that specifically degrades the RNA of RNA-DNA hybrids. The polypeptide is Ribonuclease HII (Streptococcus mutans serotype c (strain ATCC 700610 / UA159)).